A 115-amino-acid polypeptide reads, in one-letter code: Salivary protein gSG6 (115 aa).

The signal sequence occupies residues 1-28 (MAIRVELLLAMVLLPLLLLESVVPHAAA).

As to expression, female saliva (at protein level). Distal-lateral lobes of female salivary gland (at protein level). Not detected in male salivary gland (at protein level).

It is found in the secreted. In terms of biological role, required for efficient probing and blood feeding. This Anopheles gambiae (African malaria mosquito) protein is Salivary protein gSG6.